We begin with the raw amino-acid sequence, 166 residues long: 2-C-methyl-D-erythritol 2,4-cyclodiphosphate synthase (166 aa).

Asp-11 and His-13 together coordinate a divalent metal cation. 4-CDP-2-C-methyl-D-erythritol 2-phosphate-binding positions include 11-13 and 40-41; these read DVH and HS. Position 48 (His-48) interacts with a divalent metal cation. 4-CDP-2-C-methyl-D-erythritol 2-phosphate contacts are provided by residues 62–64, 135–138, Phe-142, and Arg-145; these read DLG and TTSD.

This sequence belongs to the IspF family. Homotrimer. Requires a divalent metal cation as cofactor.

It carries out the reaction 4-CDP-2-C-methyl-D-erythritol 2-phosphate = 2-C-methyl-D-erythritol 2,4-cyclic diphosphate + CMP. Its pathway is isoprenoid biosynthesis; isopentenyl diphosphate biosynthesis via DXP pathway; isopentenyl diphosphate from 1-deoxy-D-xylulose 5-phosphate: step 4/6. Functionally, involved in the biosynthesis of isopentenyl diphosphate (IPP) and dimethylallyl diphosphate (DMAPP), two major building blocks of isoprenoid compounds. Catalyzes the conversion of 4-diphosphocytidyl-2-C-methyl-D-erythritol 2-phosphate (CDP-ME2P) to 2-C-methyl-D-erythritol 2,4-cyclodiphosphate (ME-CPP) with a corresponding release of cytidine 5-monophosphate (CMP). The polypeptide is 2-C-methyl-D-erythritol 2,4-cyclodiphosphate synthase (Pseudarthrobacter chlorophenolicus (strain ATCC 700700 / DSM 12829 / CIP 107037 / JCM 12360 / KCTC 9906 / NCIMB 13794 / A6) (Arthrobacter chlorophenolicus)).